The following is a 261-amino-acid chain: Neurexophilin-2 (261 aa).

The first 22 residues, methionine 1–serine 22, serve as a signal peptide directing secretion. The interval glutamate 23–isoleucine 87 is II. Residues asparagine 83, asparagine 136, asparagine 146, and asparagine 152 are each glycosylated (N-linked (GlcNAc...) asparagine). Residues glutamine 88–phenylalanine 166 form an III region. Positions glutamate 167–glutamate 175 are IV (linker domain). The v (Cys-rich) stretch occupies residues threonine 176–glycine 261.

This sequence belongs to the neurexophilin family. May be proteolytically processed at the boundary between the N-terminal non-conserved and the central conserved domain in neuron-like cells.

The protein localises to the secreted. Its function is as follows. May be signaling molecules that resemble neuropeptides and that act by binding to alpha-neurexins and possibly other receptors. The protein is Neurexophilin-2 (Nxph2) of Mus musculus (Mouse).